The sequence spans 284 residues: Formamidopyrimidine-DNA glycosylase (284 aa).

Proline 2 acts as the Schiff-base intermediate with DNA in catalysis. Glutamate 3 functions as the Proton donor in the catalytic mechanism. The Proton donor; for beta-elimination activity role is filled by lysine 58. Histidine 97, arginine 120, and arginine 165 together coordinate DNA. The segment at 250-284 adopts an FPG-type zinc-finger fold; the sequence is FVYDRAGEPCKVCGTPVRQIVQGQRSTFYCTHCQH. The active-site Proton donor; for delta-elimination activity is the arginine 274.

It belongs to the FPG family. Monomer. The cofactor is Zn(2+).

The catalysed reaction is Hydrolysis of DNA containing ring-opened 7-methylguanine residues, releasing 2,6-diamino-4-hydroxy-5-(N-methyl)formamidopyrimidine.. It carries out the reaction 2'-deoxyribonucleotide-(2'-deoxyribose 5'-phosphate)-2'-deoxyribonucleotide-DNA = a 3'-end 2'-deoxyribonucleotide-(2,3-dehydro-2,3-deoxyribose 5'-phosphate)-DNA + a 5'-end 5'-phospho-2'-deoxyribonucleoside-DNA + H(+). Functionally, involved in base excision repair of DNA damaged by oxidation or by mutagenic agents. Acts as a DNA glycosylase that recognizes and removes damaged bases. Has a preference for oxidized purines, such as 7,8-dihydro-8-oxoguanine (8-oxoG). Has AP (apurinic/apyrimidinic) lyase activity and introduces nicks in the DNA strand. Cleaves the DNA backbone by beta-delta elimination to generate a single-strand break at the site of the removed base with both 3'- and 5'-phosphates. This chain is Formamidopyrimidine-DNA glycosylase, found in Cupriavidus pinatubonensis (strain JMP 134 / LMG 1197) (Cupriavidus necator (strain JMP 134)).